The primary structure comprises 647 residues: Probable squalene--hopene cyclase (647 aa).

Residues 67-108 (EAKIGNYLRRTQGAHGGWPLVHDGPFDMSASVKSYFALKMIG) form a PFTB 1 repeat. The active-site Proton donor is aspartate 388. PFTB repeat units lie at residues 413–454 (IARG…GALL) and 530–577 (IRKA…ALLG).

It belongs to the terpene cyclase/mutase family.

The enzyme catalyses squalene = hop-22(29)-ene. It carries out the reaction squalene + H2O = hopan-22-ol. It functions in the pathway secondary metabolite biosynthesis; hopanoid biosynthesis. Functionally, catalyzes the cyclization of squalene into hopene. Probably part of an operon y4aABCD involved in the synthesis of an isoprenoid compound. The polypeptide is Probable squalene--hopene cyclase (shc) (Sinorhizobium fredii (strain NBRC 101917 / NGR234)).